The primary structure comprises 689 residues: MEYFKKEVDVAGKKFIVESGKVAKQAGGSCTVRIGETVVLVTVVSLKEPKVGIDFMPLTVDYRERTYAAGKIPGGFFKRETRPRDGEVLVSRLIDRSIRPLFPEYYRNDTQISAVVLSHDGENDSEMAAILGASIALYTSDLPFTTPIASVRIGKINGQLIINPLIAEQKLSDLDLVVSGTEEALTMVEAGARELSEAEMLEALNLAGKTLKGICLFQKTLPAKTKIVVEQPQHNSLLKADIEAEAVSKAEMSVVIKEKCEREFFWDSFKKDISSRLLEKYPEELPSTIDAILEDIFYQKARDLVLNKKIRTDGRGFEEIRPITCETGVLPRVHGSSLFTRGQTQALVTVTLGSPCDMQVIDELIVEYKERFMLHYNFPGFATGEPKRDRAVSRREIGHGNLAKKALKHIMPDGEDFGYAVRIVSDILESNGSSSMASVCGGSLALFNAGVPVKSSCAGVSMGLMKEGGSYVILTDITGMEDHLGDMDFKVAGTRKGITALQMDIKILGLTTEIVAQALEQAKRGRFFILDQMDAVVSAPKNDLSNYAPRMITLTIPQNKIGELIGPGGKNIRKIQEDNNVKIDIEETGRVFISGVESDGVKSAKEYVECLTVEAEVGKIYKSRVTKIMAFGAFAEILPGKEGLIHISQLSNRHTKRVEDVVKEGDEVKVKVIEIDKQGRINLSIKAAL.

Aspartate 482 and aspartate 488 together coordinate Mg(2+). In terms of domain architecture, KH spans 549-608 (PRMITLTIPQNKIGELIGPGGKNIRKIQEDNNVKIDIEETGRVFISGVESDGVKSAKEYV). The S1 motif domain maps to 618-686 (GKIYKSRVTK…KQGRINLSIK (69 aa)).

This sequence belongs to the polyribonucleotide nucleotidyltransferase family. Requires Mg(2+) as cofactor.

The protein localises to the cytoplasm. The enzyme catalyses RNA(n+1) + phosphate = RNA(n) + a ribonucleoside 5'-diphosphate. In terms of biological role, involved in mRNA degradation. Catalyzes the phosphorolysis of single-stranded polyribonucleotides processively in the 3'- to 5'-direction. This chain is Polyribonucleotide nucleotidyltransferase, found in Endomicrobium trichonymphae.